An 839-amino-acid chain; its full sequence is Taste receptor type 1 member 2 (839 aa).

The first 19 residues, 1 to 19 (MGTRATTICSLFFLLWVLA), serve as a signal peptide directing secretion. Residues 20-566 (EPAENSDFYL…VFLEWHEAPT (547 aa)) lie on the Extracellular side of the membrane. N84, N248, N292, N312, N368, N407, N428, N487, and N527 each carry an N-linked (GlcNAc...) asparagine glycan. A helical membrane pass occupies residues 567 to 587 (IAVALLAALGFLSTLAILVIF). Topologically, residues 588–602 (WRHFQTPIVRSAGGP) are cytoplasmic. The helical transmembrane segment at 603 to 623 (MCFLMLTLLLVAYMVVPVYVG) threads the bilayer. At 624–635 (PPKVSTCLCRQA) the chain is on the extracellular side. Residues 636–656 (LFPLCFTICISCIAVRSFQIV) traverse the membrane as a helical segment. Residues 657–681 (CAFKMASRFPRAYSYWVRYQGPYVS) lie on the Cytoplasmic side of the membrane. The chain crosses the membrane as a helical span at residues 682 to 702 (MAFITVLKMVIVVIGMLATGL). Topologically, residues 703 to 727 (SPTTRTDPDDPKITIVSCNPNYRNS) are extracellular. A helical membrane pass occupies residues 728-748 (LLFNTSLDLLLSVVGFSFAYM). Residues 749 to 760 (GKELPTNYNEAK) lie on the Cytoplasmic side of the membrane. A helical transmembrane segment spans residues 761-781 (FITLSMTFYFTSSVSLCTFMS). Residues 782–784 (AYS) lie on the Extracellular side of the membrane. The helical transmembrane segment at 785 to 805 (GVLVTIVDLLVTVLNLLAISL) threads the bilayer. The Cytoplasmic portion of the chain corresponds to 806 to 839 (GYFGPKCYMILFYPERNTPAYFNSMIQGYTMRRD).

Belongs to the G-protein coupled receptor 3 family. TAS1R subfamily. In terms of assembly, forms heterodimers with TAS1R3.

Its subcellular location is the cell membrane. Its function is as follows. Putative taste receptor. TAS1R2/TAS1R3 recognizes diverse natural and synthetic sweeteners. This is Taste receptor type 1 member 2 (TAS1R2) from Gorilla gorilla gorilla (Western lowland gorilla).